Consider the following 107-residue polypeptide: Replication initiation control protein YabA (107 aa).

H81, C83, C97, and C100 together coordinate Zn(2+).

The protein belongs to the YabA family. As to quaternary structure, homotetramer. Interacts with both DnaA and DnaN, acting as a bridge between these two proteins. The cofactor is Zn(2+).

It localises to the cytoplasm. The protein localises to the nucleoid. Involved in control of chromosome replication initiation. Inhibits the cooperative binding of DnaA to the oriC region, thus negatively regulating initiation of chromosome replication. Inhibits the ability of DnaA-ATP to form a helix on DNA; does not disassemble preformed DnaA-DNA helices. Decreases the residence time of DnaA on the chromosome at its binding sites (oriC, replication forks and promoter-binding sites). Tethers DnaA to the replication machinery via the DNA polymerase beta sliding clamp subunit (dnaN). Associates with oriC and other DnaA targets on the chromosome in a DnaA-dependent manner. In Streptococcus equi subsp. zooepidemicus (strain MGCS10565), this protein is Replication initiation control protein YabA.